A 334-amino-acid polypeptide reads, in one-letter code: Formamidase (334 aa).

Positions 14–260 (FLVAAIQFPV…WEIVTGEIYP (247 aa)) constitute a CN hydrolase domain. Glu60 acts as the Proton acceptor in catalysis. Lys133 functions as the Proton donor in the catalytic mechanism. Cys166 acts as the Nucleophile in catalysis.

The protein belongs to the carbon-nitrogen hydrolase superfamily. Aliphatic amidase family.

It carries out the reaction formamide + H2O = formate + NH4(+). Its function is as follows. Is an aliphatic amidase with a restricted substrate specificity, as it only hydrolyzes formamide. This chain is Formamidase, found in Helicobacter pylori (strain G27).